A 387-amino-acid chain; its full sequence is MSQSKSNILWFLPTHGDGRYLGTATGGREVNFNYLRQIAQAADQLGYFGVLLPTGRSCEDSWIVASSVAPFTERLRYLVAVRPGLQSPSVAARMTATLDRITNGRLLINVVTGGDPVENKGDGIFLGHDERYEVTREFLNVYSDLLGGKAVNVEGKHIRIEDGKLLFPPVQSPRPPLYFGGSSDAGIDVAVDTVDKYLTWGEPPAQVAEKIARVREVANARGRKLSFGIRLHVIVRETNEEAWSAANELIKHVSDDTIARAQRNFARMDSVGQQRMAQLHGGKRDKLEISPNLWAGVGLVRGGAGTALVGDAQTVAARIKEYQDIGIDTFIMSGYPHLEEAYRFAELVFPLLSLDHGSNVTRLHHNSGPFGETVGNDYRPSRLASQS.

Residues 365–387 (HNSGPFGETVGNDYRPSRLASQS) are disordered.

This sequence belongs to the SsuD family.

The catalysed reaction is an alkanesulfonate + FMNH2 + O2 = an aldehyde + FMN + sulfite + H2O + 2 H(+). Functionally, catalyzes the desulfonation of aliphatic sulfonates. The sequence is that of Alkanesulfonate monooxygenase from Bradyrhizobium diazoefficiens (strain JCM 10833 / BCRC 13528 / IAM 13628 / NBRC 14792 / USDA 110).